Reading from the N-terminus, the 257-residue chain is Zinc transporter ZupT (257 aa).

Transmembrane regions (helical) follow at residues 5 to 25 (LILT…GVLG), 32 to 52 (LLAF…LMEM), 61 to 81 (GMSP…YFGL), 109 to 129 (AILL…ATFV), 137 to 157 (LGFG…LAVA), 171 to 191 (ILWA…AWLI), 195 to 215 (MISP…MVAL), and 236 to 256 (GVLC…TAGI). Positions 120 and 123 each coordinate Fe(2+). The Zn(2+) site is built by glutamate 123 and histidine 148. The Fe(2+) site is built by asparagine 149, glutamate 152, and glutamate 181. Glutamate 152 is a Zn(2+) binding site.

Belongs to the ZIP transporter (TC 2.A.5) family. ZupT subfamily.

It localises to the cell inner membrane. It carries out the reaction Zn(2+)(in) = Zn(2+)(out). In terms of biological role, mediates zinc uptake. May also transport other divalent cations. The sequence is that of Zinc transporter ZupT from Shigella flexneri serotype 5b (strain 8401).